The chain runs to 360 residues: Peptide chain release factor 1 (360 aa).

Gln-235 is modified (N5-methylglutamine). Basic and acidic residues predominate over residues 284 to 293 (HKRQQEEAST). A disordered region spans residues 284–305 (HKRQQEEASTRRNLLGSGDRSD).

The protein belongs to the prokaryotic/mitochondrial release factor family. Post-translationally, methylated by PrmC. Methylation increases the termination efficiency of RF1.

It is found in the cytoplasm. Its function is as follows. Peptide chain release factor 1 directs the termination of translation in response to the peptide chain termination codons UAG and UAA. In Pectobacterium atrosepticum (strain SCRI 1043 / ATCC BAA-672) (Erwinia carotovora subsp. atroseptica), this protein is Peptide chain release factor 1.